The chain runs to 350 residues: Glycogenin-1 (350 aa).

At threonine 2 the chain carries N-acetylthreonine. The UDP site is built by leucine 9, threonine 11, asparagine 12, and tyrosine 15. UDP-alpha-D-glucose is bound by residues leucine 9, threonine 11, asparagine 12, and tyrosine 15. Residue serine 44 is modified to Phosphoserine. A UDP-binding site is contributed by arginine 77. UDP-alpha-D-glucose contacts are provided by arginine 77, lysine 86, aspartate 102, alanine 103, aspartate 104, asparagine 133, serine 134, aspartate 160, aspartate 163, and glutamine 164. Aspartate 102, alanine 103, and aspartate 104 together coordinate UDP. Aspartate 102 is a binding site for Mn(2+). Aspartate 104 is a Mn(2+) binding site. Tyrosine 195 carries an O-linked (Glc...) tyrosine glycan. Residues histidine 212, glycine 215, and lysine 218 each coordinate UDP. Histidine 212 contributes to the Mn(2+) binding site. UDP-alpha-D-glucose contacts are provided by glycine 215 and lysine 218. Residues 301–333 form an interaction with GYS1 region; sequence SHLSLGEIPAMAQPFVSSEERKERWEQGQADYM.

This sequence belongs to the glycosyltransferase 8 family. Glycogenin subfamily. In terms of assembly, part of the GYS1-GYG1 complex, a heterooctamer composed of a tetramer of GYS1 and 2 dimers of GYG1, where each GYS1 protomer binds to one GYG1 subunit (via GYG1 C-terminus); the GYS1 tetramer may dissociate from GYG1 dimers to continue glycogen polymerization on its own. May also form a heterooctamer complex with GYS2 (via GYG1 C-terminus). It depends on Mn(2+) as a cofactor. Post-translationally, self-glycosylated by the transfer of glucose residues from UDP-glucose to itself, forming an alpha-1,4-glycan of around 10 residues attached to Tyr-195. Phosphorylated. In terms of tissue distribution, highly expressed in skeletal muscle and heart, with lower levels in brain, lung, kidney and pancreas.

The protein resides in the cytoplasm. Its subcellular location is the nucleus. The catalysed reaction is L-tyrosyl-[glycogenin] + UDP-alpha-D-glucose = alpha-D-glucosyl-L-tyrosyl-[glycogenin] + UDP + H(+). The enzyme catalyses [1,4-alpha-D-glucosyl](n)-L-tyrosyl-[glycogenin] + UDP-alpha-D-glucose = [1,4-alpha-D-glucosyl](n+1)-L-tyrosyl-[glycogenin] + UDP + H(+). It participates in glycan biosynthesis; glycogen biosynthesis. Its activity is regulated as follows. Inhibited by palladium ions. Functionally, glycogenin participates in the glycogen biosynthetic process along with glycogen synthase and glycogen branching enzyme. It catalyzes the formation of a short alpha (1,4)-glucosyl chain covalently attached via a glucose 1-O-tyrosyl linkage to internal tyrosine residues and these chains act as primers for the elongation reaction catalyzed by glycogen synthase. The protein is Glycogenin-1 of Homo sapiens (Human).